The primary structure comprises 112 residues: Nitrogen regulatory protein GlnK1 (112 aa).

Threonine 29 is an ADP binding site. Residues threonine 29 and valine 38 each contribute to the ATP site. 2-oxoglutarate is bound at residue isoleucine 52–aspartate 54. Residues valine 64, aspartate 88–lysine 90, and arginine 101–arginine 103 contribute to the ADP site. ATP is bound by residues valine 64, proline 86–lysine 90, and arginine 101–arginine 103.

This sequence belongs to the P(II) protein family. Homotrimer. Interacts and forms a complex with Amt1.

It is found in the cytoplasm. Its activity is regulated as follows. Formation of the GlnK1/Amt1 complex is decreased in the presence of Mg-ATP or 2-oxoglutarate. The presence of both effectors abolishes the formation of the complex. Functionally, involved in the regulation of nitrogen metabolism. Regulates the activity of its targets by protein-protein interaction in response to the nitrogen status of the cell. Regulates the activity of the ammonia channel Amt1 via direct interaction. The protein is Nitrogen regulatory protein GlnK1 of Methanocaldococcus jannaschii (strain ATCC 43067 / DSM 2661 / JAL-1 / JCM 10045 / NBRC 100440) (Methanococcus jannaschii).